The chain runs to 257 residues: Deoxyribose-phosphate aldolase (257 aa).

The Proton donor/acceptor role is filled by aspartate 102. The active-site Schiff-base intermediate with acetaldehyde is lysine 166. Residue lysine 198 is the Proton donor/acceptor of the active site.

It belongs to the DeoC/FbaB aldolase family. DeoC type 2 subfamily.

It is found in the cytoplasm. The catalysed reaction is 2-deoxy-D-ribose 5-phosphate = D-glyceraldehyde 3-phosphate + acetaldehyde. It functions in the pathway carbohydrate degradation; 2-deoxy-D-ribose 1-phosphate degradation; D-glyceraldehyde 3-phosphate and acetaldehyde from 2-deoxy-alpha-D-ribose 1-phosphate: step 2/2. In terms of biological role, catalyzes a reversible aldol reaction between acetaldehyde and D-glyceraldehyde 3-phosphate to generate 2-deoxy-D-ribose 5-phosphate. This Shewanella amazonensis (strain ATCC BAA-1098 / SB2B) protein is Deoxyribose-phosphate aldolase.